Reading from the N-terminus, the 449-residue chain is Putative F-box/FBD/LRR-repeat protein At3g49480 (449 aa).

Residues 11-59 form the F-box domain; that stretch reads EDRISSLPDDLLVKILLCVPTKDAAATTFLSKRWRFVWRMLPRLNYIET. LRR repeat units follow at residues 60–91, 153–180, 182–206, 235–260, 275–302, and 327–352; these read TSDVKSNTVWWFLEESFRFHKAPLLERLWIDL, RLTLSDKILVDVPCQVSLPSLRELDLFC, VYKDEDSHVKLLSSCPVLKHLKVTR, FREDSDMSDPFLVTDTPNLLSLHIFD, VTVVTDELFPSEKFMRPLSSVKYLALSP, and SEYDLLESLLVLLSKCSKLKVFLVDS. The FBD domain maps to 364–412; the sequence is WNQPSSIPRCLSSHLEIFEWDGYVGREDEKKIIRYILENSKYLKTAGIS.

The sequence is that of Putative F-box/FBD/LRR-repeat protein At3g49480 from Arabidopsis thaliana (Mouse-ear cress).